The primary structure comprises 497 residues: Aldehyde dehydrogenase (497 aa).

242 to 247 (GSTLVG) lines the NAD(+) pocket. Catalysis depends on Glu-265, which acts as the Proton acceptor. Cys-299 (nucleophile) is an active-site residue.

The protein belongs to the aldehyde dehydrogenase family.

The catalysed reaction is an aldehyde + NAD(+) + H2O = a carboxylate + NADH + 2 H(+). It functions in the pathway alcohol metabolism; ethanol degradation; acetate from ethanol: step 2/2. This is Aldehyde dehydrogenase (aldA) from Aspergillus niger.